A 141-amino-acid polypeptide reads, in one-letter code: Cell division protein SepF (141 aa).

Belongs to the SepF family. As to quaternary structure, homodimer. Interacts with FtsZ.

The protein resides in the cytoplasm. Its function is as follows. Cell division protein that is part of the divisome complex and is recruited early to the Z-ring. Probably stimulates Z-ring formation, perhaps through the cross-linking of FtsZ protofilaments. Its function overlaps with FtsA. The chain is Cell division protein SepF from Anoxybacillus flavithermus (strain DSM 21510 / WK1).